The primary structure comprises 218 residues: N-(5'-phosphoribosyl)anthranilate isomerase (218 aa).

This sequence belongs to the TrpF family.

It carries out the reaction N-(5-phospho-beta-D-ribosyl)anthranilate = 1-(2-carboxyphenylamino)-1-deoxy-D-ribulose 5-phosphate. It participates in amino-acid biosynthesis; L-tryptophan biosynthesis; L-tryptophan from chorismate: step 3/5. This Bordetella parapertussis (strain 12822 / ATCC BAA-587 / NCTC 13253) protein is N-(5'-phosphoribosyl)anthranilate isomerase.